The sequence spans 88 residues: Exodeoxyribonuclease 7 small subunit (88 aa).

The protein belongs to the XseB family. Heterooligomer composed of large and small subunits.

The protein resides in the cytoplasm. The enzyme catalyses Exonucleolytic cleavage in either 5'- to 3'- or 3'- to 5'-direction to yield nucleoside 5'-phosphates.. Its function is as follows. Bidirectionally degrades single-stranded DNA into large acid-insoluble oligonucleotides, which are then degraded further into small acid-soluble oligonucleotides. The sequence is that of Exodeoxyribonuclease 7 small subunit from Bordetella petrii (strain ATCC BAA-461 / DSM 12804 / CCUG 43448).